A 1382-amino-acid chain; its full sequence is DNA-directed RNA polymerase subunit beta' (1382 aa).

Zn(2+) is bound by residues C70, C72, C85, and C88. Mg(2+)-binding residues include D460, D462, and D464. Positions 808, 882, 889, and 892 each coordinate Zn(2+).

This sequence belongs to the RNA polymerase beta' chain family. As to quaternary structure, the RNAP catalytic core consists of 2 alpha, 1 beta, 1 beta' and 1 omega subunit. When a sigma factor is associated with the core the holoenzyme is formed, which can initiate transcription. Mg(2+) serves as cofactor. The cofactor is Zn(2+).

It catalyses the reaction RNA(n) + a ribonucleoside 5'-triphosphate = RNA(n+1) + diphosphate. Functionally, DNA-dependent RNA polymerase catalyzes the transcription of DNA into RNA using the four ribonucleoside triphosphates as substrates. The sequence is that of DNA-directed RNA polymerase subunit beta' from Citrifermentans bemidjiense (strain ATCC BAA-1014 / DSM 16622 / JCM 12645 / Bem) (Geobacter bemidjiensis).